The primary structure comprises 327 residues: Transcription factor bHLH48 (327 aa).

Residues 137 to 179 are disordered; sequence EPAETDSMVENQNQSYSSGKRKEREKKVKSSTKKNKSSVESDK. A bHLH domain is found at 191 to 241; that stretch reads QATDNHSLAERARREKINARMKLLQELVPGCDKIQGTALVLDEIINHVQTL.

Homodimer. In terms of tissue distribution, expressed in leaves, stems, and flowers.

It localises to the nucleus. The sequence is that of Transcription factor bHLH48 (BHLH48) from Arabidopsis thaliana (Mouse-ear cress).